Consider the following 423-residue polypeptide: UDP-N-acetylglucosamine 1-carboxyvinyltransferase (423 aa).

Residue 21–22 (KN) participates in phosphoenolpyruvate binding. Arg-92 contributes to the UDP-N-acetyl-alpha-D-glucosamine binding site. Catalysis depends on Cys-116, which acts as the Proton donor. The residue at position 116 (Cys-116) is a 2-(S-cysteinyl)pyruvic acid O-phosphothioketal. Residues Asp-305 and Val-327 each coordinate UDP-N-acetyl-alpha-D-glucosamine.

Belongs to the EPSP synthase family. MurA subfamily.

It localises to the cytoplasm. The catalysed reaction is phosphoenolpyruvate + UDP-N-acetyl-alpha-D-glucosamine = UDP-N-acetyl-3-O-(1-carboxyvinyl)-alpha-D-glucosamine + phosphate. It functions in the pathway cell wall biogenesis; peptidoglycan biosynthesis. Functionally, cell wall formation. Adds enolpyruvyl to UDP-N-acetylglucosamine. This chain is UDP-N-acetylglucosamine 1-carboxyvinyltransferase, found in Fervidobacterium nodosum (strain ATCC 35602 / DSM 5306 / Rt17-B1).